The primary structure comprises 2393 residues: Leucine-rich repeat serine/threonine-protein kinase 1 (2393 aa).

ANK repeat units follow at residues 56–86 (HGRTPLMLAAHNGKLDSLRTILMLSPNSLNL), 90–120 (RGKTALHMAAESGETSIVLELVELGSDPMKS), 123–152 (EGHCALELAQMAGHNEVAAKLIDAIQKESE), 197–226 (EDETALLIACTNGHIEIVRHLLQFEEHLLQ), 230–259 (SKDTVIHAAVSSQNVEVLQLCLEKFPQLVK), 264–293 (EGSTCLHWAARCGSSECVSTILNFPFPSEF), 317–347 (ECRTAMYLAVAEGHLEVVKAMTDFKCTSIDG), 361–390 (RGRTPFMLAAFNQNLPLMTLLLDAGADVNL), 407–437 (IGSGALVEAVRSDGLHIVHFLLDRGALDTDN), and 439–464 (ALRLAAQGKNEKLIRVFLVRLVFADP). 5 LRR repeats span residues 532-553 (AITRVDLSDNRLNTFPSILFQM), 555-576 (SLRSLNLADNSIRKIEIPTYYI), 580-600 (SLEILNLRNNQLECIAIQFLS), 604-625 (QLQQLDVSKNELSQLPEYIWLC), and 627-648 (ALKELNASYNRLSTLPMVARAS). The segment at 649-675 (RGERPRLNNSNNNFNTQSPTQESNPIV) is disordered. LRR repeat units lie at residues 718 to 739 (TLTTINLSFNKFHTFPFCLACT), 742 to 763 (RLLILNMSNNSMTSLPPMACVP), and 765 to 787 (HLRTLDLSYNKIQESFIEASPLH). The interval 797–844 (TSNGSMLPKRRNSPARQHRSRSKSAVRSQRSLSVSRHHALIDPQKEEE) is disordered. The span at 804–820 (PKRRNSPARQHRSRSKS) shows a compositional bias: basic residues. Residues 821 to 830 (AVRSQRSLSV) are compositionally biased toward polar residues. Basic and acidic residues predominate over residues 835-844 (ALIDPQKEEE). 4 LRR repeats span residues 856 to 877 (WLKTLQLAGNRLRSISVTNAAS), 883 to 905 (ALNVMDISDNKLLQAPPDVARLT), 906 to 928 (LLSMLNLSGNTAIKELPPDYGML), and 930 to 952 (RLWSLSLKGCSLKEPLESMVNVE). One can recognise a Roc domain in the interval 969–1167 (ESKTYHHLRL…NTIYRTAWEV (199 aa)). Residues 982–989 (GSDGVGKS), 1040–1044 (DFGGQ), and 1098–1101 (TNLD) each bind GTP. Residues 1233-1422 (FYAACTFLHD…GFWSRLVTRI (190 aa)) form the COR domain. Disordered regions lie at residues 1361-1382 (CPSPAGSPTKSPLRRTSPTDQN) and 1596-1633 (RNGSRSRTSSSASHRRSQDDGELPITSSSHMKGSRTTG). 2 stretches are compositionally biased toward polar residues: residues 1366–1382 (GSPTKSPLRRTSPTDQN) and 1620–1633 (ITSSSHMKGSRTTG). The Protein kinase domain occupies 1694–1992 (LKRSRMLGRG…LVGFCAAPEF (299 aa)). ATP-binding positions include 1700-1708 (LGRGAFGFV) and Lys1726. The active-site Proton acceptor is the Asp1847.

The protein belongs to the protein kinase superfamily. TKL Ser/Thr protein kinase family. ROCO subfamily. Mg(2+) is required as a cofactor. Requires Mn(2+) as cofactor. In terms of tissue distribution, expressed in cell bodies, but not in dendritic or axonal processes, of adult head neurons. Also present in non-neuronal tissues, such as the body wall musculature and the epithelial cells of the nematode vulva.

It localises to the golgi apparatus. It carries out the reaction L-seryl-[protein] + ATP = O-phospho-L-seryl-[protein] + ADP + H(+). The enzyme catalyses L-threonyl-[protein] + ATP = O-phospho-L-threonyl-[protein] + ADP + H(+). In terms of biological role, determines polarized sorting of synaptic vesicle (SV) proteins to the axons by excluding SV proteins from the dendrite-specific transport machinery in the Golgi. Role in stress response. Appears to antagonize the effects of pink-1 both in the regulation of axon guidance and stress response. In Caenorhabditis elegans, this protein is Leucine-rich repeat serine/threonine-protein kinase 1 (lrk-1).